The primary structure comprises 158 residues: 3-hydroxyacyl-[acyl-carrier-protein] dehydratase FabZ (158 aa).

Residue H60 is part of the active site.

This sequence belongs to the thioester dehydratase family. FabZ subfamily.

It localises to the cytoplasm. It carries out the reaction a (3R)-hydroxyacyl-[ACP] = a (2E)-enoyl-[ACP] + H2O. Functionally, involved in unsaturated fatty acids biosynthesis. Catalyzes the dehydration of short chain beta-hydroxyacyl-ACPs and long chain saturated and unsaturated beta-hydroxyacyl-ACPs. This is 3-hydroxyacyl-[acyl-carrier-protein] dehydratase FabZ from Zymomonas mobilis subsp. mobilis (strain ATCC 31821 / ZM4 / CP4).